We begin with the raw amino-acid sequence, 348 residues long: Uroporphyrinogen decarboxylase (348 aa).

Substrate-binding positions include 28–32 (RQAGR), Asp-78, Tyr-154, Thr-209, and His-325.

This sequence belongs to the uroporphyrinogen decarboxylase family. In terms of assembly, homodimer.

The protein resides in the cytoplasm. The catalysed reaction is uroporphyrinogen III + 4 H(+) = coproporphyrinogen III + 4 CO2. Its pathway is porphyrin-containing compound metabolism; protoporphyrin-IX biosynthesis; coproporphyrinogen-III from 5-aminolevulinate: step 4/4. In terms of biological role, catalyzes the decarboxylation of four acetate groups of uroporphyrinogen-III to yield coproporphyrinogen-III. This is Uroporphyrinogen decarboxylase from Rhodopseudomonas palustris (strain HaA2).